The following is a 346-amino-acid chain: E3 ubiquitin-protein ligase ARK2C (346 aa).

Disordered regions lie at residues 23–76 and 267–288; these read PFQR…QHSG and PHKYKKRRPQDGKGKKDEGEES. The ubiquitin binding stretch occupies residues 266–268; the sequence is FPH. Residues 275-284 are compositionally biased toward basic and acidic residues; sequence PQDGKGKKDE. Residues Cys-294 and Cys-297 each contribute to the Zn(2+) site. The RING-type; atypical zinc finger occupies 294–335; sequence CTICLSMLEDGEDVRRLPCMHLFHQLCVDQWLAMSKKCPICR. Residues 309-313 form a ubiquitin binding region; sequence RLPCM. Residues His-317 and Cys-320 each coordinate Zn(2+).

The protein belongs to the Arkadia family. As to quaternary structure, monomer; binding to the ubiquitin-conjugating enzyme E2 does not trigger homodimerization.

Its subcellular location is the nucleus. The enzyme catalyses S-ubiquitinyl-[E2 ubiquitin-conjugating enzyme]-L-cysteine + [acceptor protein]-L-lysine = [E2 ubiquitin-conjugating enzyme]-L-cysteine + N(6)-ubiquitinyl-[acceptor protein]-L-lysine.. Binds free ubiquitin non-covalently via its RING-type zinc finger. Ubiquitin-binding leads to enhance the E3 ubiquitin-protein ligase activity by stabilizing the ubiquitin-conjugating enzyme E2 (donor ubiquitin) in the 'closed' conformation and activating ubiquitin transfer. In terms of biological role, E3 ubiquitin-protein ligase that acts as a regulator of motor axon elongation. Required for efficient motor axon extension in the dorsal forelimb by enhancing the transcriptional responses of the SMAD1/SMAD5/SMAD8 effectors, which are activated downstream of BMP. Acts by mediating ubiquitination and degradation of SMAD inhibitors such as SMAD6, SMAD7, SKI and SNON isoform of SKIL. The protein is E3 ubiquitin-protein ligase ARK2C of Homo sapiens (Human).